The following is a 357-amino-acid chain: Protein RecA (357 aa).

67–74 (GPESSGKT) contacts ATP.

Belongs to the RecA family.

It localises to the cytoplasm. Functionally, can catalyze the hydrolysis of ATP in the presence of single-stranded DNA, the ATP-dependent uptake of single-stranded DNA by duplex DNA, and the ATP-dependent hybridization of homologous single-stranded DNAs. It interacts with LexA causing its activation and leading to its autocatalytic cleavage. This Shewanella oneidensis (strain ATCC 700550 / JCM 31522 / CIP 106686 / LMG 19005 / NCIMB 14063 / MR-1) protein is Protein RecA.